The primary structure comprises 364 residues: D-alanine--D-alanine ligase (364 aa).

The ATP-grasp domain maps to 141-346 (KNLFAQAGLR…YSELIERLIA (206 aa)). 174-229 (EQELGYPCFVKPANAGSSVGISKCKQRDDLKTAFAEAFKYDRKIIIEESIVGREIE) serves as a coordination point for ATP. The Mg(2+) site is built by Asp300, Glu313, and Asn315.

Belongs to the D-alanine--D-alanine ligase family. Mg(2+) is required as a cofactor. Mn(2+) serves as cofactor.

It is found in the cytoplasm. The catalysed reaction is 2 D-alanine + ATP = D-alanyl-D-alanine + ADP + phosphate + H(+). The protein operates within cell wall biogenesis; peptidoglycan biosynthesis. Functionally, cell wall formation. This is D-alanine--D-alanine ligase from Geobacillus thermodenitrificans (strain NG80-2).